Reading from the N-terminus, the 441-residue chain is Glutamate--tRNA ligase 1 (441 aa).

Positions 9-19 match the 'HIGH' region motif; that stretch reads PSPTGFIHVGN. The 'KMSKS' region signature appears at 239–243; it reads ALSKR. Position 242 (Lys-242) interacts with ATP.

This sequence belongs to the class-I aminoacyl-tRNA synthetase family. Glutamate--tRNA ligase type 1 subfamily. Monomer.

Its subcellular location is the cytoplasm. It carries out the reaction tRNA(Glu) + L-glutamate + ATP = L-glutamyl-tRNA(Glu) + AMP + diphosphate. Functionally, catalyzes the attachment of glutamate to tRNA(Glu) in a two-step reaction: glutamate is first activated by ATP to form Glu-AMP and then transferred to the acceptor end of tRNA(Glu). The polypeptide is Glutamate--tRNA ligase 1 (Cereibacter sphaeroides (strain ATCC 17025 / ATH 2.4.3) (Rhodobacter sphaeroides)).